Reading from the N-terminus, the 226-residue chain is Charged multivesicular body protein 4 (226 aa).

A coiled-coil region spans residues 22-88; the sequence is IQKLRETENM…DGTLSTIEMQ (67 aa). Residues 169 to 226 form a disordered region; sequence QENFDKEIIGIPEPTPTLPEAPTEDLPEKAKEKKKATTTTAVEDDDDPDMKQLLSWSN.

It belongs to the SNF7 family. In terms of assembly, homopolymer; forms elongated striated filaments of uniform ~10nm width. Monomers interact in a staggered arrangement mediated by complementary charged electrostatic surfaces. Interacts with l(2)gd1 (via DM14 domains 1 and 3); the interaction is direct and blocks access to the surface involved in homopolymerization. This interaction may be required for the ESCRT-III complex role in multivesicular body formation. In terms of tissue distribution, expressed at considerably higher levels in testis than in ovary. Expressed in midgut, eye, mouthparts and male accessory gland.

The protein resides in the endosome. It is found in the multivesicular body. The protein localises to the midbody. Its activity is regulated as follows. May be regulated by aurB/Aurora kinase B-dependent phosphorylation. Its function is as follows. Probable core polymerisation component of the endosomal sorting required for transport (ESCRT) III complex involved in multiple cellular processes requiring the outward bending of membranes, including vesicle budding, membrane repair and cytokinesis. The ESCRT pathway involves 4 complexes (ESCRT-0, -I, -II and -III) that sequentially assemble on the cytoplasmic side of membranes and induce membrane remodeling, budding and scission. As part of the ESCRT-III complex, involved in the budding of intraluminal vesicles (ILVs) into endosomes to form multivesicular bodies (MVBs), which target their contents for degradation via the endolysosomal pathway. Involved in regulation of signal transduction pathways, including the Notch and BMP/decapentaplegic (dpp) pathways, by sequestering the intracellular domains of activated receptors into ILVs, isolating them from the cytoplasm and targeting them for lysosomal degradation. Involved in targeting ubiquitilated proteins, such as mono-ubiquitilanated N/Notch, to MVBs for degradation. Plays a role in wing development by regulating Notch signaling. Involved in abscission of germline cells during oogenesis. Involved in spermiogenesis. Required for efficient cytoplasmic isolation and abscission during cytokinesis of epithelial sensory organ precursor cells. May be involved in septate junction remodeling and maintenance. The sequence is that of Charged multivesicular body protein 4 from Drosophila melanogaster (Fruit fly).